The sequence spans 329 residues: Ribosomal RNA small subunit methyltransferase C (329 aa).

This sequence belongs to the methyltransferase superfamily. RsmC family. Monomer.

The protein localises to the cytoplasm. It carries out the reaction guanosine(1207) in 16S rRNA + S-adenosyl-L-methionine = N(2)-methylguanosine(1207) in 16S rRNA + S-adenosyl-L-homocysteine + H(+). Specifically methylates the guanine in position 1207 of 16S rRNA in the 30S particle. This chain is Ribosomal RNA small subunit methyltransferase C, found in Actinobacillus pleuropneumoniae serotype 3 (strain JL03).